The primary structure comprises 374 residues: Formylglycine-generating enzyme (374 aa).

The N-terminal stretch at 1–33 is a signal peptide; the sequence is MAAPALGPARGCGAELTLVLLLSLFLLLGWAAG. Cysteines 50 and 52 form a disulfide. A disordered region spans residues 57–102; sequence RPGAQGSSAAAHRYSREANAPGSVPGGRPSPPTKMVPIPAGVFTMG. Ca(2+) is bound at residue glutamate 130. N-linked (GlcNAc...) asparagine glycosylation occurs at asparagine 141. 2 disulfides stabilise this stretch: cysteine 218/cysteine 365 and cysteine 235/cysteine 346. 8 residues coordinate Ca(2+): asparagine 259, isoleucine 260, aspartate 273, phenylalanine 275, asparagine 293, glycine 296, alanine 298, and glutamate 300. Cu(2+) is bound by residues cysteine 336 and cysteine 341. Positions 341–360 are interaction with sulfatases; sequence CYRYRCAARSQNTPDSSASN.

Belongs to the sulfatase-modifying factor family. In terms of assembly, monomer, homodimer and heterodimer with SUMF2. The cofactor is Cu(2+). In terms of processing, N-glycosylated. Contains high-mannose-type oligosaccharides.

Its subcellular location is the endoplasmic reticulum lumen. It carries out the reaction L-cysteinyl-[sulfatase] + 2 a thiol + O2 = an organic disulfide + 3-oxo-L-alanyl-[sulfatase] + hydrogen sulfide + H2O + H(+). The protein operates within protein modification; sulfatase oxidation. Oxidase that catalyzes the conversion of cysteine to 3-oxoalanine on target proteins, using molecular oxygen and an unidentified reducing agent. 3-oxoalanine modification, which is also named formylglycine (fGly), occurs in the maturation of arylsulfatases and some alkaline phosphatases that use the hydrated form of 3-oxoalanine as a catalytic nucleophile. Known substrates include GALNS, ARSA, STS and ARSE. In Bos taurus (Bovine), this protein is Formylglycine-generating enzyme.